Reading from the N-terminus, the 329-residue chain is Cytosolic arginine sensor for mTORC1 subunit 2 (329 aa).

2 ACT domains span residues 72–139 and 262–322; these read ADAT…MHTL and ELWK…NALQ.

The protein belongs to the GATS family. As to quaternary structure, may form homodimers and heterodimers.

Its subcellular location is the cytoplasm. The protein resides in the cytosol. In terms of biological role, functions as a negative regulator of the TORC1 signaling pathway. In Xenopus tropicalis (Western clawed frog), this protein is Cytosolic arginine sensor for mTORC1 subunit 2.